The chain runs to 131 residues: D-ribose pyranase (131 aa).

The active-site Proton donor is histidine 20. Residues aspartate 28, histidine 98, and 120–122 (YAN) each bind substrate.

The protein belongs to the RbsD / FucU family. RbsD subfamily. In terms of assembly, homodecamer.

Its subcellular location is the cytoplasm. The catalysed reaction is beta-D-ribopyranose = beta-D-ribofuranose. It functions in the pathway carbohydrate metabolism; D-ribose degradation; D-ribose 5-phosphate from beta-D-ribopyranose: step 1/2. Catalyzes the interconversion of beta-pyran and beta-furan forms of D-ribose. This is D-ribose pyranase from Bacillus mycoides (strain KBAB4) (Bacillus weihenstephanensis).